A 272-amino-acid polypeptide reads, in one-letter code: Putative pyruvate, phosphate dikinase regulatory protein (272 aa).

154–161 (GVSRTSKS) is an ADP binding site.

Belongs to the pyruvate, phosphate/water dikinase regulatory protein family. PDRP subfamily.

It carries out the reaction N(tele)-phospho-L-histidyl/L-threonyl-[pyruvate, phosphate dikinase] + ADP = N(tele)-phospho-L-histidyl/O-phospho-L-threonyl-[pyruvate, phosphate dikinase] + AMP + H(+). The catalysed reaction is N(tele)-phospho-L-histidyl/O-phospho-L-threonyl-[pyruvate, phosphate dikinase] + phosphate + H(+) = N(tele)-phospho-L-histidyl/L-threonyl-[pyruvate, phosphate dikinase] + diphosphate. Bifunctional serine/threonine kinase and phosphorylase involved in the regulation of the pyruvate, phosphate dikinase (PPDK) by catalyzing its phosphorylation/dephosphorylation. The chain is Putative pyruvate, phosphate dikinase regulatory protein from Wolbachia pipientis subsp. Culex pipiens (strain wPip).